The sequence spans 304 residues: Signal recognition particle receptor FtsY (304 aa).

GTP-binding positions include 109 to 116 (GVNGVGKT), 191 to 195 (DTAGR), and 255 to 258 (TKLD).

Belongs to the GTP-binding SRP family. FtsY subfamily. In terms of assembly, part of the signal recognition particle protein translocation system, which is composed of SRP and FtsY. Post-translationally, sensitive to endogenous proteolytic cleavage between residues 18 and 19 and between residues 86 and 87.

The protein resides in the cell membrane. It is found in the cytoplasm. The catalysed reaction is GTP + H2O = GDP + phosphate + H(+). Functionally, involved in targeting and insertion of nascent membrane proteins into the cytoplasmic membrane. Acts as a receptor for the complex formed by the signal recognition particle (SRP) and the ribosome-nascent chain (RNC). This Thermus aquaticus protein is Signal recognition particle receptor FtsY.